Reading from the N-terminus, the 151-residue chain is Copper transporter 2 (151 aa).

A run of 2 helical transmembrane segments spans residues 42-62 (GARGGMYALAILFMFALAVLL) and 97-117 (VAYLIMLALMSFNGGVFLAIV).

Belongs to the copper transporter (Ctr) (TC 1.A.56) family. SLC31A subfamily. In terms of assembly, self-interacts. Interacts with SWEET11 and COPT1.

It localises to the cell membrane. In terms of biological role, involved in the transport of copper, in cooperation with SWEET11 and COPT1. Contributes to the removal of copper (Cu) from xylem, and thus to the sensitivity toward bacterial pathogens such as X.oryzae pv. oryzae (Xoo). The chain is Copper transporter 2 (COPT2) from Oryza sativa subsp. japonica (Rice).